The primary structure comprises 113 residues: Iron-sulfur cluster insertion protein ErpA (113 aa).

Iron-sulfur cluster contacts are provided by Cys41, Cys105, and Cys107.

This sequence belongs to the HesB/IscA family. In terms of assembly, homodimer. Requires iron-sulfur cluster as cofactor.

In terms of biological role, required for insertion of 4Fe-4S clusters for at least IspG. The protein is Iron-sulfur cluster insertion protein ErpA of Mannheimia succiniciproducens (strain KCTC 0769BP / MBEL55E).